Here is a 353-residue protein sequence, read N- to C-terminus: Putative 3-oxoacyl-[acyl-carrier-protein] synthase 3 (353 aa).

Catalysis depends on residues Cys122, His268, and Asn299.

It belongs to the thiolase-like superfamily. FabH family. As to quaternary structure, homodimer.

The protein localises to the cytoplasm. The enzyme catalyses malonyl-[ACP] + acetyl-CoA + H(+) = 3-oxobutanoyl-[ACP] + CO2 + CoA. It participates in lipid metabolism; fatty acid biosynthesis. In terms of biological role, may catalyze the condensation reaction of fatty acid synthesis by the addition to an acyl acceptor of two carbons from malonyl-ACP. This chain is Putative 3-oxoacyl-[acyl-carrier-protein] synthase 3, found in Campylobacter jejuni subsp. jejuni serotype O:2 (strain ATCC 700819 / NCTC 11168).